Reading from the N-terminus, the 148-residue chain is Lysozyme C (148 aa).

Positions 1-18 (MKALIVLGLVLLSVTVQG) are cleaved as a signal peptide. Positions 19-148 (KVFERCELAR…VRQYVQGCGV (130 aa)) constitute a C-type lysozyme domain. Intrachain disulfides connect C24–C146, C48–C134, C83–C99, and C95–C113. Catalysis depends on residues E53 and D71.

The protein belongs to the glycosyl hydrolase 22 family. As to quaternary structure, monomer.

The protein localises to the secreted. It catalyses the reaction Hydrolysis of (1-&gt;4)-beta-linkages between N-acetylmuramic acid and N-acetyl-D-glucosamine residues in a peptidoglycan and between N-acetyl-D-glucosamine residues in chitodextrins.. Its function is as follows. Lysozymes have primarily a bacteriolytic function; those in tissues and body fluids are associated with the monocyte-macrophage system and enhance the activity of immunoagents. This is Lysozyme C (LYZ) from Homo sapiens (Human).